The following is a 421-amino-acid chain: Cyclin-A2 (421 aa).

Residue Met-1 is modified to N-acetylmethionine. The disordered stretch occupies residues Met-1 to Arg-60. At Ser-5 the chain carries Phosphoserine.

This sequence belongs to the cyclin family. Cyclin AB subfamily. Interacts with the CDK1 and CDK2 protein kinases to form serine/threonine kinase holoenzyme complexes. Interacts with CDK1 (hyperphosphorylated form in G1 and underphosphorylated forms in S and G2). Interacts with CDK2; the interaction increases from G1 to G2. Interacts (associated with CDK2 but not with CDK1) with SCAPER; regulates the activity of CCNA2/CDK2 by transiently maintaining CCNA2 in the cytoplasm. Forms a ternary complex with CDK2 and CDKN1B; CDKN1B inhibits the kinase activity of CDK2 through conformational rearrangements. Interacts with INCA1. Post-translationally, polyubiquitinated via 'Lys-11'-linked ubiquitin by the anaphase-promoting complex (APC/C), leading to its degradation by the proteasome. Deubiquitinated and stabilized by USP37 enables entry into S phase. Ubiquitinated during the G1 phase by the SCF(FBXO31) complex, leading to its proteasomal degradation.

Its subcellular location is the nucleus. The protein localises to the cytoplasm. Its function is as follows. Cyclin which controls both the G1/S and the G2/M transition phases of the cell cycle. Functions through the formation of specific serine/threonine kinase holoenzyme complexes with the cyclin-dependent protein kinases CDK1 and CDK2. The cyclin subunit confers the substrate specificity of these complexes and differentially interacts with and activates CDK1 and CDK2 throughout the cell cycle. This is Cyclin-A2 from Mesocricetus auratus (Golden hamster).